The primary structure comprises 198 residues: Small ribosomal subunit protein eS1 (198 aa).

The protein belongs to the eukaryotic ribosomal protein eS1 family.

This chain is Small ribosomal subunit protein eS1, found in Methanosphaerula palustris (strain ATCC BAA-1556 / DSM 19958 / E1-9c).